The sequence spans 466 residues: Cysteine--tRNA ligase (466 aa).

Residue Cys28 coordinates Zn(2+). The 'HIGH' region signature appears at 30-40 (PTVYNYIHIGN). Zn(2+)-binding residues include Cys208, His233, and Glu237. Positions 265–269 (KMSKS) match the 'KMSKS' region motif. Lys268 lines the ATP pocket.

It belongs to the class-I aminoacyl-tRNA synthetase family. As to quaternary structure, monomer. Zn(2+) serves as cofactor.

The protein localises to the cytoplasm. It carries out the reaction tRNA(Cys) + L-cysteine + ATP = L-cysteinyl-tRNA(Cys) + AMP + diphosphate. This Staphylococcus aureus (strain USA300) protein is Cysteine--tRNA ligase.